A 125-amino-acid polypeptide reads, in one-letter code: Small ribosomal subunit protein uS12 (125 aa).

Asp-89 is subject to 3-methylthioaspartic acid.

It belongs to the universal ribosomal protein uS12 family. In terms of assembly, part of the 30S ribosomal subunit. Contacts proteins S8 and S17. May interact with IF1 in the 30S initiation complex.

Its function is as follows. With S4 and S5 plays an important role in translational accuracy. In terms of biological role, interacts with and stabilizes bases of the 16S rRNA that are involved in tRNA selection in the A site and with the mRNA backbone. Located at the interface of the 30S and 50S subunits, it traverses the body of the 30S subunit contacting proteins on the other side and probably holding the rRNA structure together. The combined cluster of proteins S8, S12 and S17 appears to hold together the shoulder and platform of the 30S subunit. This is Small ribosomal subunit protein uS12 from Clostridium novyi (strain NT).